We begin with the raw amino-acid sequence, 58 residues long: Temporin-1Th (58 aa).

Positions 1–22 are cleaved as a signal peptide; the sequence is MFTLKKSLLLLFFLGTINLSLC. The propeptide occupies 23–46; that stretch reads EEERNAEEERRDEPDERDVQVEKR. The interval 25–46 is disordered; it reads ERNAEEERRDEPDERDVQVEKR. At leucine 56 the chain carries Leucine amide.

Expressed by the skin glands.

It is found in the secreted. In terms of biological role, antimicrobial peptide that renders both the outer and inner membrane of bacteria permeable to hydrophobic substances of low molecular mass. This chain is Temporin-1Th, found in Rana temporaria (European common frog).